Reading from the N-terminus, the 96-residue chain is CRISPR-associated endoribonuclease Cas2 1 (96 aa).

D8 is a Mg(2+) binding site.

Belongs to the CRISPR-associated endoribonuclease Cas2 protein family. As to quaternary structure, homodimer, forms a heterotetramer with a Cas1 homodimer. Mg(2+) is required as a cofactor.

Its function is as follows. CRISPR (clustered regularly interspaced short palindromic repeat), is an adaptive immune system that provides protection against mobile genetic elements (viruses, transposable elements and conjugative plasmids). CRISPR clusters contain sequences complementary to antecedent mobile elements and target invading nucleic acids. CRISPR clusters are transcribed and processed into CRISPR RNA (crRNA). Functions as a ssRNA-specific endoribonuclease. Involved in the integration of spacer DNA into the CRISPR cassette. The chain is CRISPR-associated endoribonuclease Cas2 1 from Moorella thermoacetica (strain ATCC 39073 / JCM 9320).